The sequence spans 451 residues: MKQTAFYQQRRVLVIGLAKSGFAAAKLLHELGAIITVNDQKPFEENKEAQQLEQLGIRVICGGHPLELLDEPFDLVVKNPGIPYTNPMVKKAMEKGLPVVTEVELAYHISEAPFIGITGSNGKTTTTTLIYEMLREGEKRPLLAGNIGTAACEVAKKAEASNWLVTELSSFQLAGIRDFRPRISVLLNIFDAHLDYHGTKEAYAQAKANIFKNQTNEDYAVINADDELVMQLAENIHAQKVAFSATKVLGRGAYINNGFIYWNDEAVIAVADIVLPGKHNLENILAAVAVAKLAGVDNKSIYQVLTTFTGVKHRLQYVATIDGRKFFNDSKATNILATQKALSAFEKDSVILLAGGLDRGNEFDALLPYLHNVKAVVLFGQTAPKIARVAKQAGIETIEYVDNVEKAVPVAYQLSEPGDVILLSPACASWDQYKTFEQRGDIFIGAVHKLK.

An ATP-binding site is contributed by 119–125 (GSNGKTT).

This sequence belongs to the MurCDEF family.

Its subcellular location is the cytoplasm. It catalyses the reaction UDP-N-acetyl-alpha-D-muramoyl-L-alanine + D-glutamate + ATP = UDP-N-acetyl-alpha-D-muramoyl-L-alanyl-D-glutamate + ADP + phosphate + H(+). It participates in cell wall biogenesis; peptidoglycan biosynthesis. Functionally, cell wall formation. Catalyzes the addition of glutamate to the nucleotide precursor UDP-N-acetylmuramoyl-L-alanine (UMA). In Geobacillus sp. (strain WCH70), this protein is UDP-N-acetylmuramoylalanine--D-glutamate ligase.